Reading from the N-terminus, the 344-residue chain is S-adenosylmethionine:tRNA ribosyltransferase-isomerase (344 aa).

It belongs to the QueA family. In terms of assembly, monomer.

It localises to the cytoplasm. It carries out the reaction 7-aminomethyl-7-carbaguanosine(34) in tRNA + S-adenosyl-L-methionine = epoxyqueuosine(34) in tRNA + adenine + L-methionine + 2 H(+). It functions in the pathway tRNA modification; tRNA-queuosine biosynthesis. Functionally, transfers and isomerizes the ribose moiety from AdoMet to the 7-aminomethyl group of 7-deazaguanine (preQ1-tRNA) to give epoxyqueuosine (oQ-tRNA). The sequence is that of S-adenosylmethionine:tRNA ribosyltransferase-isomerase from Thiobacillus denitrificans (strain ATCC 25259 / T1).